The primary structure comprises 445 residues: UPF0210 protein SPJ_0248 (445 aa).

This sequence belongs to the UPF0210 family. In terms of assembly, homodimer.

The chain is UPF0210 protein SPJ_0248 from Streptococcus pneumoniae (strain JJA).